A 67-amino-acid polypeptide reads, in one-letter code: Large ribosomal subunit protein bL35 (67 aa).

This sequence belongs to the bacterial ribosomal protein bL35 family.

The chain is Large ribosomal subunit protein bL35 from Rhizobium johnstonii (strain DSM 114642 / LMG 32736 / 3841) (Rhizobium leguminosarum bv. viciae).